Reading from the N-terminus, the 121-residue chain is Ribonuclease P protein component (121 aa).

This sequence belongs to the RnpA family. In terms of assembly, consists of a catalytic RNA component (M1 or rnpB) and a protein subunit.

It carries out the reaction Endonucleolytic cleavage of RNA, removing 5'-extranucleotides from tRNA precursor.. Functionally, RNaseP catalyzes the removal of the 5'-leader sequence from pre-tRNA to produce the mature 5'-terminus. It can also cleave other RNA substrates such as 4.5S RNA. The protein component plays an auxiliary but essential role in vivo by binding to the 5'-leader sequence and broadening the substrate specificity of the ribozyme. This Nitrosomonas eutropha (strain DSM 101675 / C91 / Nm57) protein is Ribonuclease P protein component.